The following is a 1164-amino-acid chain: DNA-directed RNA polymerase 132 kDa polypeptide (1164 aa).

This sequence belongs to the RNA polymerase beta chain family. The DNA-dependent RNA polymerase used for intermediate and late genes expression consists of eight subunits (147) kDa, (133) kDa, (35) kDa, (30) kDa, (22) kDa, (19) kDa, (18) kDa and (7) kDa totalling more than 500 kDa in mass. The same holoenzyme, with the addition of the transcription-specificity factor RAP94, is used for early gene expression.

It is found in the virion. It catalyses the reaction RNA(n) + a ribonucleoside 5'-triphosphate = RNA(n+1) + diphosphate. Its function is as follows. Part of the DNA-dependent RNA polymerase which catalyzes the transcription of viral DNA into RNA using the four ribonucleoside triphosphates as substrates. Responsible for the transcription of early, intermediate and late genes. DNA-dependent RNA polymerase associates with the early transcription factor (ETF), itself composed of D6 and A7, thereby allowing the early genes transcription. Late transcription, and probably also intermediate transcription, require newly synthesized RNA polymerase. This Monkeypox virus (strain Zaire-96-I-16) (MPX) protein is DNA-directed RNA polymerase 132 kDa polypeptide (RPO132).